A 406-amino-acid chain; its full sequence is Tryptophan synthase beta chain (406 aa).

Lys-99 is modified (N6-(pyridoxal phosphate)lysine).

This sequence belongs to the TrpB family. Tetramer of two alpha and two beta chains. Pyridoxal 5'-phosphate serves as cofactor.

It carries out the reaction (1S,2R)-1-C-(indol-3-yl)glycerol 3-phosphate + L-serine = D-glyceraldehyde 3-phosphate + L-tryptophan + H2O. Its pathway is amino-acid biosynthesis; L-tryptophan biosynthesis; L-tryptophan from chorismate: step 5/5. Its function is as follows. The beta subunit is responsible for the synthesis of L-tryptophan from indole and L-serine. This Rhizobium meliloti (strain 1021) (Ensifer meliloti) protein is Tryptophan synthase beta chain.